The chain runs to 156 residues: Small ribosomal subunit protein uS7 (156 aa).

Belongs to the universal ribosomal protein uS7 family. As to quaternary structure, part of the 30S ribosomal subunit. Contacts proteins S9 and S11.

In terms of biological role, one of the primary rRNA binding proteins, it binds directly to 16S rRNA where it nucleates assembly of the head domain of the 30S subunit. Is located at the subunit interface close to the decoding center, probably blocks exit of the E-site tRNA. In Aster yellows witches'-broom phytoplasma (strain AYWB), this protein is Small ribosomal subunit protein uS7.